Consider the following 126-residue polypeptide: Small ribosomal subunit protein uS13 (126 aa).

The interval 98–126 (PLRGQSTKNNARTRKGKKKTVANKKKATK) is disordered. Positions 108–126 (ARTRKGKKKTVANKKKATK) are enriched in basic residues.

The protein belongs to the universal ribosomal protein uS13 family. In terms of assembly, part of the 30S ribosomal subunit. Forms a loose heterodimer with protein S19. Forms two bridges to the 50S subunit in the 70S ribosome.

In terms of biological role, located at the top of the head of the 30S subunit, it contacts several helices of the 16S rRNA. In the 70S ribosome it contacts the 23S rRNA (bridge B1a) and protein L5 of the 50S subunit (bridge B1b), connecting the 2 subunits; these bridges are implicated in subunit movement. Contacts the tRNAs in the A and P-sites. The protein is Small ribosomal subunit protein uS13 of Parabacteroides distasonis (strain ATCC 8503 / DSM 20701 / CIP 104284 / JCM 5825 / NCTC 11152).